We begin with the raw amino-acid sequence, 1111 residues long: Nuclear migration and anchoring protein unc-84 (1111 aa).

Residues Met1 to Ser509 are Nuclear-facing. Required for nuclear envelope localization regions lie at residues Tyr118 to Leu244 and Lys503 to Lys507. The segment at Glu232–Leu253 is disordered. The segment covering Thr243–Gly252 has biased composition (basic and acidic residues). The helical transmembrane segment at Trp510–Leu530 threads the bilayer. Residues Thr531–Val1111 lie on the Perinuclear space side of the membrane. The interaction with zyg-12 stretch occupies residues Gln912–Val1111. Residues Gly945 to Val1109 form the SUN domain.

As to quaternary structure, component of the unc-83-unc-84 LINC complex which contains at least unc-83 and unc-84. Within the unc-83-unc-84 LINC complex interacts (via C-terminus) with unc-83; the interaction is probably required to recruit unc-83 to the nuclear membrane. Most likely interacts with anc-1; the interaction is probably required to recruit anc-1 to the nuclear envelope. Interacts (via C-terminus) with zyg-12 (via C-terminus); the interaction is direct. May interact with lmn-1; this interaction may be required to complete the connection between the nuclear lamina and the cytoskeleton. As to expression, expressed in all somatic cells. Not expressed in germ cells in the mitotic and transition zones of the gonad. One study shows expression at the beginning of the late pachytene stage in the proximal gonad, but there is no expression in the male germline, suggesting expression is specific to oogenesis in hermaphrodites.

The protein localises to the nucleus inner membrane. Its subcellular location is the cytoplasm. It is found in the cytoskeleton. Functionally, involved in nuclear migration and anchoring in hypodermal precursor cells. Most likely recruits anc-1 to the nuclear envelope where anc-1 functions to tether the nucleus to the actin cytoskeleton. Component of the unc-83-unc-84 LINC (LInker of Nucleoskeleton and Cytoskeleton) complex where it recruits and interacts with unc-83 to form a bridge connecting the nuclear envelope to the cytoskeleton which allows for nuclear transport along microtubules. Its role in nuclear migration may be in association with lamin, lmn-1. Regulates nuclear migrations in one-cell embryos, controlling the posterior migration of the male pronucleus following fertilization. Not required for centrosome attachment to the nucleus. Plays a role in the maintenance of the nuclear envelope architecture in body wall muscle cells. May be involved in DNA damage repair through an association with zyg-12. Potentially has roles in homologous recombination, double strand break repair and meiotic recombination. Specifically, may in part inhibit non-homologous end joining repair, most likely through recruiting fan-1 to the nucleoplasm, to facilitate the repair of DNA cross-links. In Caenorhabditis elegans, this protein is Nuclear migration and anchoring protein unc-84.